We begin with the raw amino-acid sequence, 71 residues long: General transcription factor IIH subunit 5 (71 aa).

At Thr69 the chain carries Phosphothreonine.

This sequence belongs to the TFB5 family. As to quaternary structure, component of the 7-subunit TFIIH core complex composed of XPB/ERCC3, XPD/ERCC2, GTF2H1, GTF2H2, GTF2H3, GTF2H4 and GTF2H5, which is active in NER. The core complex associates with the 3-subunit CDK-activating kinase (CAK) module composed of CCNH/cyclin H, CDK7 and MNAT1 to form the 10-subunit holoenzyme (holo-TFIIH) active in transcription. Part of TBP-based Pol II pre-initiation complex (PIC), in which Pol II core assembles with general transcription factors and other specific initiation factors including GTF2E1, GTF2E2, GTF2F1, GTF2F2, TCEA1, ERCC2, ERCC3, GTF2H2, GTF2H3, GTF2H4, GTF2H5, GTF2A1, GTF2A2, GTF2B and TBP; this large multi-subunit PIC complex mediates DNA unwinding and targets Pol II core to the transcription start site where the first phosphodiester bond forms.

The protein localises to the nucleus. Its subcellular location is the cytoplasm. Functionally, component of the general transcription and DNA repair factor IIH (TFIIH) core complex, which is involved in general and transcription-coupled nucleotide excision repair (NER) of damaged DNA and, when complexed to CAK, in RNA transcription by RNA polymerase II. In NER, TFIIH acts by opening DNA around the lesion to allow the excision of the damaged oligonucleotide and its replacement by a new DNA fragment. In transcription, TFIIH has an essential role in transcription initiation. When the pre-initiation complex (PIC) has been established, TFIIH is required for promoter opening and promoter escape. Phosphorylation of the C-terminal tail (CTD) of the largest subunit of RNA polymerase II by the kinase module CAK controls the initiation of transcription. Necessary for the stability of the TFIIH complex and for the presence of normal levels of TFIIH in the cell. The chain is General transcription factor IIH subunit 5 from Homo sapiens (Human).